The following is a 379-amino-acid chain: Omega-3 fatty acid desaturase, endoplasmic reticulum (379 aa).

A helical membrane pass occupies residues 52 to 72 (LSYVVRDVIFVATLIGIAIHL). The Histidine box-1 signature appears at 97–101 (HDCGH). Positions 133 to 137 (HKTHH) match the Histidine box-2 motif. 2 consecutive transmembrane segments (helical) span residues 213 to 233 (TLCW…FGSL) and 236 to 256 (FKIY…VTYL). A Histidine box-3 motif is present at residues 300–304 (HVIHH).

The protein belongs to the fatty acid desaturase type 1 family.

The protein resides in the endoplasmic reticulum membrane. The protein operates within lipid metabolism; polyunsaturated fatty acid biosynthesis. ER (microsomal) omega-3 fatty acid desaturase introduces the third double bond in the biosynthesis of 18:3 fatty acids, important constituents of plant membranes. It is thought to use cytochrome b5 as an electron donor and to act on fatty acids esterified to phosphatidylcholine and, possibly, other phospholipids. This chain is Omega-3 fatty acid desaturase, endoplasmic reticulum (FAD3), found in Nicotiana tabacum (Common tobacco).